Reading from the N-terminus, the 375-residue chain is Protein RecA (375 aa).

A disordered region spans residues 1–20; the sequence is MPAEMKSAASGSDPRSSGER. An ATP-binding site is contributed by 79-86; it reads GPESSGKT.

Belongs to the RecA family.

The protein resides in the cytoplasm. In terms of biological role, can catalyze the hydrolysis of ATP in the presence of single-stranded DNA, the ATP-dependent uptake of single-stranded DNA by duplex DNA, and the ATP-dependent hybridization of homologous single-stranded DNAs. It interacts with LexA causing its activation and leading to its autocatalytic cleavage. This Parasynechococcus marenigrum (strain WH8102) protein is Protein RecA.